Here is a 408-residue protein sequence, read N- to C-terminus: E3 ubiquitin-protein ligase IE2 (408 aa).

A compositionally biased stretch (polar residues) spans 1 to 10; it reads MSRQINAATP. Disordered stretches follow at residues 1–67 and 176–199; these read MSRQ…ENVQ and QSPD…QSEP. Over residues 13 to 25 the composition is skewed to basic residues; sequence SRRHRLSLSRRRI. The segment covering 30–47 has biased composition (low complexity); the sequence is SPEAQPSSSSRSQPSSSS. Tandem repeats lie at residues 34-41, 42-49, 51-54, and 55-58. The interval 34–49 is 2 X 8 AA tandem repeats of Q-P-S-S-S-S-R-S; that stretch reads QPSSSSRSQPSSSSRS. Residues 51 to 58 form a 2 X 4 AA tandem repeats of R-R-Q-E region; sequence RRQERRQE. A compositionally biased stretch (low complexity) spans 183–197; that stretch reads SPQSPQPQQQQQQQS. The segment at 207–255 adopts an RING-type zinc-finger fold; it reads CNICFTTFKDTKNVNSSFVTSIHCNHAVCFKCYVKIIMDNSVYKCFCSA.

It belongs to the alphabaculovirus IE2 protein family. In terms of assembly, homooligomer. Post-translationally, auto-ubiquitinated.

It is found in the host nucleus. The enzyme catalyses S-ubiquitinyl-[E2 ubiquitin-conjugating enzyme]-L-cysteine + [acceptor protein]-L-lysine = [E2 ubiquitin-conjugating enzyme]-L-cysteine + N(6)-ubiquitinyl-[acceptor protein]-L-lysine.. In terms of biological role, RING-finger E3 ubiquitin ligase that plays an important regulatory role during the initial stages of infection. Migrates to specific nuclear foci early in infection supposely to prepare the sites for viral transcription and replication by targeting and ubiquitinating host proteins. Acts as a transcriptional activator and activates a number of viral promoters including itself, IE1 and the promoter of 39K gene. This is E3 ubiquitin-protein ligase IE2 (IE2) from Lepidoptera (butterflies and moths).